A 398-amino-acid polypeptide reads, in one-letter code: ATP-dependent RNA helicase eIF4A (398 aa).

The Q motif motif lies at 25–53 (DSFDSMDLKPELLRGVYAYGFERPSAIQQ). The 171-residue stretch at 56 to 226 (IKPIIAGHDV…TKFMRDPIRI (171 aa)) folds into the Helicase ATP-binding domain. 69 to 76 (AQSGTGKT) contributes to the ATP binding site. Positions 174-177 (DEAD) match the DEAD box motif. A Helicase C-terminal domain is found at 237–398 (GIKQFYIAVE…EMPMNVADLI (162 aa)).

The protein belongs to the DEAD box helicase family. eIF4A subfamily. As to quaternary structure, component of the eIF4F complex, which composition varies with external and internal environmental conditions. It is composed of at least eIF4A, eIF4E and eIF4G.

It is found in the cytoplasm. The catalysed reaction is ATP + H2O = ADP + phosphate + H(+). Its function is as follows. ATP-dependent RNA helicase which is a subunit of the eIF4F complex involved in cap recognition and is required for mRNA binding to ribosome. In the current model of translation initiation, eIF4A unwinds RNA secondary structures in the 5'-UTR of mRNAs which is necessary to allow efficient binding of the small ribosomal subunit, and subsequent scanning for the initiator codon. This Aspergillus niger (strain ATCC MYA-4892 / CBS 513.88 / FGSC A1513) protein is ATP-dependent RNA helicase eIF4A (tif1).